A 256-amino-acid chain; its full sequence is Beta-fibrinogenase-like (256 aa).

The N-terminal stretch at 1–18 is a signal peptide; the sequence is MVLIKVLANLLVLQLSYA. A propeptide spanning residues 19–24 is cleaved from the precursor; the sequence is QKSSEL. The region spanning 25–247 is the Peptidase S1 domain; the sequence is VVGGDECNIN…YTDWIQSIIA (223 aa). 6 cysteine pairs are disulfide-bonded: C31-C161, C49-C65, C96-C254, C140-C208, C172-C187, and C198-C223. A glycan (N-linked (GlcNAc...) asparagine) is linked at N44. Catalysis depends on H64, which acts as the Charge relay system. N-linked (GlcNAc...) asparagine glycosylation is found at N78 and N101. Catalysis depends on D108, which acts as the Charge relay system. N152 carries N-linked (GlcNAc...) asparagine glycosylation. S202 acts as the Charge relay system in catalysis.

Belongs to the peptidase S1 family. Snake venom subfamily. As to quaternary structure, monomer. In terms of tissue distribution, expressed by the venom gland.

The protein localises to the secreted. In terms of biological role, snake venom serine protease that has fibrinogenolytic activities by hydrolyzing the beta chain of fibrinogen (FGB). Typical arginine esterase which hydrolyzes esters and amides of arginine. The chain is Beta-fibrinogenase-like from Daboia siamensis (Eastern Russel's viper).